Reading from the N-terminus, the 346-residue chain is Putative alpha/beta hydrolase R526 (346 aa).

Belongs to the AB hydrolase 3 family.

The protein resides in the virion. This Acanthamoeba polyphaga mimivirus (APMV) protein is Putative alpha/beta hydrolase R526.